The chain runs to 142 residues: Hemoglobin subunit alpha (142 aa).

One can recognise a Globin domain in the interval 1-142; the sequence is GLTAADKTLI…VEKALFETYR (142 aa). Residue His59 participates in O2 binding. A heme b-binding site is contributed by His88.

It belongs to the globin family. In terms of assembly, heterotetramer of two alpha chains and two beta chains (an easy dimerization is also reported). Red blood cells.

Functionally, involved in oxygen transport from the lung to the various peripheral tissues. This is Hemoglobin subunit alpha (HBA) from Latimeria chalumnae (Coelacanth).